A 341-amino-acid chain; its full sequence is HTH-type transcriptional repressor PurR (341 aa).

Residues 2 to 56 (ATIKDVAKRANVSTTTVSHVINKTRFVAEETRNAVWAAIKELHYSPSAVARSLKV) enclose the HTH lacI-type domain. A DNA-binding region (H-T-H motif) is located at residues 4-23 (IKDVAKRANVSTTTVSHVIN). Residues 48–56 (SAVARSLKV) mediate DNA binding. 5 residues coordinate hypoxanthine: tyrosine 73, arginine 190, threonine 192, phenylalanine 221, and aspartate 275.

In terms of assembly, homodimer.

It functions in the pathway purine metabolism; purine nucleotide biosynthesis [regulation]. Is the main repressor of the genes involved in the de novo synthesis of purine nucleotides, regulating purB, purC, purEK, purF, purHD, purL, purMN and guaBA expression. PurR is allosterically activated to bind its cognate DNA by binding the purine corepressors, hypoxanthine or guanine, thereby effecting transcription repression. The protein is HTH-type transcriptional repressor PurR of Shigella dysenteriae serotype 1 (strain Sd197).